A 330-amino-acid chain; its full sequence is Glycerol-3-phosphate dehydrogenase [NAD(P)+] (330 aa).

NADPH is bound by residues S11, F12, R32, and K106. The sn-glycerol 3-phosphate site is built by K106, G133, and S135. A137 contacts NADPH. Sn-glycerol 3-phosphate contacts are provided by K188, D241, S251, R252, and N253. The Proton acceptor role is filled by K188. An NADPH-binding site is contributed by R252. 2 residues coordinate NADPH: V276 and E278.

It belongs to the NAD-dependent glycerol-3-phosphate dehydrogenase family.

The protein resides in the cytoplasm. The enzyme catalyses sn-glycerol 3-phosphate + NAD(+) = dihydroxyacetone phosphate + NADH + H(+). The catalysed reaction is sn-glycerol 3-phosphate + NADP(+) = dihydroxyacetone phosphate + NADPH + H(+). Its pathway is membrane lipid metabolism; glycerophospholipid metabolism. Catalyzes the reduction of the glycolytic intermediate dihydroxyacetone phosphate (DHAP) to sn-glycerol 3-phosphate (G3P), the key precursor for phospholipid synthesis. The chain is Glycerol-3-phosphate dehydrogenase [NAD(P)+] from Clostridium botulinum (strain Alaska E43 / Type E3).